The chain runs to 138 residues: Large ribosomal subunit protein uL16 (138 aa).

Belongs to the universal ribosomal protein uL16 family. As to quaternary structure, part of the 50S ribosomal subunit.

Binds 23S rRNA and is also seen to make contacts with the A and possibly P site tRNAs. The chain is Large ribosomal subunit protein uL16 from Chlamydia muridarum (strain MoPn / Nigg).